A 169-amino-acid polypeptide reads, in one-letter code: Phosphopantetheine adenylyltransferase (169 aa).

Position 8 (serine 8) interacts with substrate. ATP is bound by residues serine 8–phenylalanine 9 and histidine 16. Positions 40, 72, and 86 each coordinate substrate. ATP-binding positions include glycine 87–arginine 89, glutamate 97, and tyrosine 122–serine 128.

Belongs to the bacterial CoaD family. In terms of assembly, homohexamer. Mg(2+) is required as a cofactor.

It localises to the cytoplasm. The enzyme catalyses (R)-4'-phosphopantetheine + ATP + H(+) = 3'-dephospho-CoA + diphosphate. The protein operates within cofactor biosynthesis; coenzyme A biosynthesis; CoA from (R)-pantothenate: step 4/5. Reversibly transfers an adenylyl group from ATP to 4'-phosphopantetheine, yielding dephospho-CoA (dPCoA) and pyrophosphate. The polypeptide is Phosphopantetheine adenylyltransferase (Cyanothece sp. (strain PCC 7425 / ATCC 29141)).